The following is a 318-amino-acid chain: Glutathione synthetase (318 aa).

The 187-residue stretch at 125–311 (EKLFTAWFPE…ITGKLMDAIE (187 aa)) folds into the ATP-grasp domain. 151–208 (FRQEHGDIILKPLDGMGGASIFRVKENDPNVSVIIETLTNHGQNYAMAQTFVPDISNG) lines the ATP pocket. Mg(2+) contacts are provided by E282 and N284.

This sequence belongs to the prokaryotic GSH synthase family. Mg(2+) serves as cofactor. Requires Mn(2+) as cofactor.

It carries out the reaction gamma-L-glutamyl-L-cysteine + glycine + ATP = glutathione + ADP + phosphate + H(+). The protein operates within sulfur metabolism; glutathione biosynthesis; glutathione from L-cysteine and L-glutamate: step 2/2. This chain is Glutathione synthetase, found in Vibrio vulnificus (strain YJ016).